Consider the following 494-residue polypeptide: Cytochrome P450 2A3 (494 aa).

Ser131 is modified (phosphoserine). An N6-acetyllysine modification is found at Lys379. A heme-binding site is contributed by Cys439.

It belongs to the cytochrome P450 family. Heme serves as cofactor. As to expression, lung.

It localises to the endoplasmic reticulum membrane. Its subcellular location is the microsome membrane. It carries out the reaction an organic molecule + reduced [NADPH--hemoprotein reductase] + O2 = an alcohol + oxidized [NADPH--hemoprotein reductase] + H2O + H(+). Functionally, cytochromes P450 are a group of heme-thiolate monooxygenases. In liver microsomes, this enzyme is involved in an NADPH-dependent electron transport pathway. It oxidizes a variety of structurally unrelated compounds, including steroids, fatty acids, and xenobiotics. The sequence is that of Cytochrome P450 2A3 (Cyp2a3) from Rattus norvegicus (Rat).